An 806-amino-acid polypeptide reads, in one-letter code: Phenylalanine--tRNA ligase beta subunit (806 aa).

The tRNA-binding domain maps to 39-154 (SAGLKKIVVG…EAIAPGTDVY (116 aa)). Positions 410-485 (PQPKVIQFDS…RLYGYDNLPS (76 aa)) constitute a B5 domain. Mg(2+) is bound by residues aspartate 463, aspartate 469, glutamate 472, and glutamate 473. An FDX-ACB domain is found at 713–806 (PKFPEVTRDI…LVATFQAKVR (94 aa)).

Belongs to the phenylalanyl-tRNA synthetase beta subunit family. Type 1 subfamily. Tetramer of two alpha and two beta subunits. Mg(2+) is required as a cofactor.

Its subcellular location is the cytoplasm. It catalyses the reaction tRNA(Phe) + L-phenylalanine + ATP = L-phenylalanyl-tRNA(Phe) + AMP + diphosphate + H(+). The polypeptide is Phenylalanine--tRNA ligase beta subunit (Latilactobacillus sakei subsp. sakei (strain 23K) (Lactobacillus sakei subsp. sakei)).